The sequence spans 213 residues: Adenylate kinase (213 aa).

10–15 serves as a coordination point for ATP; sequence GAGKGT. The tract at residues 30 to 59 is NMP; that stretch reads STGDIFRANIKNNTELGQKAKTYMDKGELV. Residues Thr31, Arg36, 57 to 59, 85 to 88, and Gln92 each bind AMP; these read ELV and GFPR. The tract at residues 126–163 is LID; it reads GRRACVGCGATYHIQFNPTKVEGICDACGEKLILRDDD. An ATP-binding site is contributed by Arg127. 2 residues coordinate Zn(2+): Cys130 and Cys133. 136 to 137 contributes to the ATP binding site; it reads TY. Residues Cys150 and Cys153 each coordinate Zn(2+). AMP-binding residues include Arg160 and Arg171. Residue Gln199 participates in ATP binding.

Belongs to the adenylate kinase family. In terms of assembly, monomer.

It localises to the cytoplasm. It catalyses the reaction AMP + ATP = 2 ADP. It functions in the pathway purine metabolism; AMP biosynthesis via salvage pathway; AMP from ADP: step 1/1. Catalyzes the reversible transfer of the terminal phosphate group between ATP and AMP. Plays an important role in cellular energy homeostasis and in adenine nucleotide metabolism. The polypeptide is Adenylate kinase (Lachnospira eligens (strain ATCC 27750 / DSM 3376 / VPI C15-48 / C15-B4) (Eubacterium eligens)).